The following is a 453-amino-acid chain: UDP-glycosyltransferase 76E9 (453 aa).

UDP-alpha-D-glucose is bound by residues serine 279, 337-339 (APQ), 354-362 (HCGWNSTLE), and 376-379 (TTDQ).

It belongs to the UDP-glycosyltransferase family.

This is UDP-glycosyltransferase 76E9 (UGT76E9) from Arabidopsis thaliana (Mouse-ear cress).